The chain runs to 629 residues: Phosphomethylpyrimidine synthase (629 aa).

Substrate-binding positions include Asn-215, Met-244, Tyr-273, His-309, 329–331 (SRG), 370–373 (DGLR), and Glu-409. His-413 serves as a coordination point for Zn(2+). Residue Tyr-436 participates in substrate binding. His-477 serves as a coordination point for Zn(2+). [4Fe-4S] cluster contacts are provided by Cys-557, Cys-560, and Cys-565. A disordered region spans residues 589–610 (ENIKRETSAEEAEEAREGMSDM).

Belongs to the ThiC family. As to quaternary structure, homodimer. It depends on [4Fe-4S] cluster as a cofactor.

It catalyses the reaction 5-amino-1-(5-phospho-beta-D-ribosyl)imidazole + S-adenosyl-L-methionine = 4-amino-2-methyl-5-(phosphooxymethyl)pyrimidine + CO + 5'-deoxyadenosine + formate + L-methionine + 3 H(+). It participates in cofactor biosynthesis; thiamine diphosphate biosynthesis. In terms of biological role, catalyzes the synthesis of the hydroxymethylpyrimidine phosphate (HMP-P) moiety of thiamine from aminoimidazole ribotide (AIR) in a radical S-adenosyl-L-methionine (SAM)-dependent reaction. The polypeptide is Phosphomethylpyrimidine synthase (Erythrobacter litoralis (strain HTCC2594)).